We begin with the raw amino-acid sequence, 284 residues long: Nucleotide-binding protein NMA0948 (284 aa).

8–15 (GLSGSGKS) contributes to the ATP binding site. GTP is bound at residue 58-61 (DVRS).

It belongs to the RapZ-like family.

Displays ATPase and GTPase activities. The polypeptide is Nucleotide-binding protein NMA0948 (Neisseria meningitidis serogroup A / serotype 4A (strain DSM 15465 / Z2491)).